A 115-amino-acid polypeptide reads, in one-letter code: NAD(P)H-quinone oxidoreductase subunit M (115 aa).

This sequence belongs to the complex I NdhM subunit family. In terms of assembly, NDH-1 can be composed of about 15 different subunits; different subcomplexes with different compositions have been identified which probably have different functions.

It localises to the cellular thylakoid membrane. The enzyme catalyses a plastoquinone + NADH + (n+1) H(+)(in) = a plastoquinol + NAD(+) + n H(+)(out). It carries out the reaction a plastoquinone + NADPH + (n+1) H(+)(in) = a plastoquinol + NADP(+) + n H(+)(out). Its function is as follows. NDH-1 shuttles electrons from an unknown electron donor, via FMN and iron-sulfur (Fe-S) centers, to quinones in the respiratory and/or the photosynthetic chain. The immediate electron acceptor for the enzyme in this species is believed to be plastoquinone. Couples the redox reaction to proton translocation, and thus conserves the redox energy in a proton gradient. Cyanobacterial NDH-1 also plays a role in inorganic carbon-concentration. The chain is NAD(P)H-quinone oxidoreductase subunit M from Prochlorococcus marinus (strain MIT 9303).